An 815-amino-acid chain; its full sequence is DNA replication licensing factor Mcm6 (815 aa).

The C4-type zinc finger occupies 152 to 179; sequence CLDCQTEIRNVEQQFKFTNPTICRNPVC. The MCM domain maps to 338-544; sequence LYQNLITCLF…VVDYAIARKI (207 aa). ATP is bound by residues S391, T392, A393, K394, S395, and N496. The Arginine finger signature appears at 520 to 523; the sequence is SRFD. ADP contacts are provided by R611 and E614. The tract at residues 672–693 is disordered; it reads DDIDMENNGSAANTETDTLDTS. The segment covering 678–693 has biased composition (polar residues); the sequence is NNGSAANTETDTLDTS.

Belongs to the MCM family. In terms of assembly, component of the Mcm2-7 complex. The complex forms a toroidal hexameric ring with the proposed subunit order Mcm2-Mcm6-Mcm4-Mcm7-Mcm3-Mcm5. The heterodimers of mcm4/mcm6 and mcm3/mcm5 interact with mcm2 and mcm7.

The protein localises to the nucleus. It carries out the reaction ATP + H2O = ADP + phosphate + H(+). Functionally, acts as a component of the Mcm2-7 complex (Mcm complex) which is the putative replicative helicase essential for 'once per cell cycle' DNA replication initiation and elongation in eukaryotic cells. Core component of CDC45-MCM-GINS (CMG) helicase, the molecular machine that unwinds template DNA during replication, and around which the replisome is built. The active ATPase sites in the Mcm2-7 ring are formed through the interaction surfaces of two neighboring subunits such that a critical structure of a conserved arginine finger motif is provided in trans relative to the ATP-binding site of the Walker A box of the adjacent subunit. The six ATPase active sites, however, are likely to contribute differentially to the complex helicase activity Required for DNA replication and cell proliferation. Required for mitotic cycles, endocycles, and the special S phase associated with the amplification of chorion genes; has a role in origin unwinding or fork elongation at chorion loci. In terms of biological role, acts as a component of the MCM2-7 complex (MCM complex) which is the replicative helicase essential for 'once per cell cycle' DNA replication initiation and elongation in eukaryotic cells. Core component of CDC45-MCM-GINS (CMG) helicase, the molecular machine that unwinds template DNA during replication, and around which the replisome is built. The active ATPase sites in the MCM2-7 ring are formed through the interaction surfaces of two neighboring subunits such that a critical structure of a conserved arginine finger motif is provided in trans relative to the ATP-binding site of the Walker A box of the adjacent subunit. The six ATPase active sites, however, are likely to contribute differentially to the complex helicase activity. The chain is DNA replication licensing factor Mcm6 (Mcm6) from Drosophila pseudoobscura pseudoobscura (Fruit fly).